The following is a 178-amino-acid chain: Caveolin-1 (178 aa).

Position 2 is an N-acetylserine (S2). A Phosphoserine modification is found at S2. A required for homooligomerization region spans residues 2–94; it reads SGGKYVDSEG…WKASFTTFTV (93 aa). The Cytoplasmic segment spans residues 2–104; it reads SGGKYVDSEG…TKYWFYRLLS (103 aa). An N6-acetyllysine; alternate modification is found at K5. K5 is covalently cross-linked (Glycyl lysine isopeptide (Lys-Gly) (interchain with G-Cter in ubiquitin); alternate). Y6 carries the phosphotyrosine modification. S9 carries the post-translational modification Phosphoserine. Y14 bears the Phosphotyrosine; by ABL1 mark. Y25 carries the phosphotyrosine modification. Glycyl lysine isopeptide (Lys-Gly) (interchain with G-Cter in ubiquitin) cross-links involve residues K26, K30, K39, K47, and K57. Residues 82-94 form an interaction with CAVIN3 region; sequence DGIWKASFTTFTV. The segment at residues 105–125 is an intramembrane region (helical); sequence ALFGIPMALIWGIYFAILSFL. Residues 126–178 lie on the Cytoplasmic side of the membrane; it reads HIWAVVPCIKSFLIEIQCISRVYSIYVHTFCDPLFEAIGKIFSNIRINMQKEI. The interacts with SPRY1, SPRY2, SPRY3 and SPRY4 stretch occupies residues 131 to 142; sequence VPCIKSFLIEIQ. S-palmitoyl cysteine attachment occurs at residues C133, C143, and C156. An interacts with SPRY1, SPRY2, and SPRY4 region spans residues 149 to 160; the sequence is SIYVHTFCDPLF. The tract at residues 167 to 178 is interacts with SPRY1, SPRY2, SPRY3 and SPRY4; it reads FSNIRINMQKEI.

It belongs to the caveolin family. In terms of assembly, homooligomer. Interacts with GLIPR2. Interacts with NOSTRIN. Interacts with SNAP25 and STX1A. Interacts (via the N-terminus) with DPP4; the interaction is direct. Interacts with CTNNB1, CDH1 and JUP. Interacts with PACSIN2; this interaction induces membrane tubulation. Interacts with SLC7A9. Interacts with BMX and BTK. Interacts with TGFBR1. Interacts with CAVIN3 (via leucine-zipper domain) in a cholesterol-sensitive manner. Interacts with CAVIN1. Interacts with EHD2 in a cholesterol-dependent manner. Forms a ternary complex with UBXN6 and VCP; mediates CAV1 targeting to lysosomes for degradation. Interacts with ABCG1; this interaction regulates ABCG1-mediated cholesterol efflux. Interacts with NEU3; this interaction enhances NEU3 sialidase activity within caveola. Interacts (via C-terminus) with SPRY1, SPRY2 (via C-terminus), SPRY3, and SPRY4. Interacts with IGFBP5; this interaction allows trafficking of IGFBP5 from the plasma membrane to the nucleus. In terms of processing, phosphorylated at Tyr-14 by ABL1 in response to oxidative stress. Ubiquitinated. Undergo monoubiquitination and multi- and/or polyubiquitination. Monoubiquitination of N-terminal lysines promotes integration in a ternary complex with UBXN6 and VCP which promotes oligomeric CAV1 targeting to lysosomes for degradation. Ubiquitinated by ZNRF1; leading to degradation and modulation of the TLR4-mediated immune response.

The protein resides in the golgi apparatus membrane. The protein localises to the cell membrane. It localises to the membrane. It is found in the caveola. Its subcellular location is the membrane raft. Functionally, may act as a scaffolding protein within caveolar membranes. Forms a stable heterooligomeric complex with CAV2 that targets to lipid rafts and drives caveolae formation. Mediates the recruitment of CAVIN proteins (CAVIN1/2/3/4) to the caveolae. Interacts directly with G-protein alpha subunits and can functionally regulate their activity. Involved in the costimulatory signal essential for T-cell receptor (TCR)-mediated T-cell activation. Its binding to DPP4 induces T-cell proliferation and NF-kappa-B activation in a T-cell receptor/CD3-dependent manner. Recruits CTNNB1 to caveolar membranes and may regulate CTNNB1-mediated signaling through the Wnt pathway. Negatively regulates TGFB1-mediated activation of SMAD2/3 by mediating the internalization of TGFBR1 from membrane rafts leading to its subsequent degradation. Binds 20(S)-hydroxycholesterol (20(S)-OHC). The sequence is that of Caveolin-1 (CAV1) from Muntiacus muntjak (Barking deer).